A 61-amino-acid chain; its full sequence is Sec-independent protein translocase protein TatA (61 aa).

A helical transmembrane segment spans residues 2 to 22; it reads GLSGISPLSLLLILAIIVALF.

The protein belongs to the TatA/E family. As to quaternary structure, the Tat system comprises two distinct complexes: a TatABC complex, containing multiple copies of TatA, TatB and TatC subunits, and a separate TatA complex, containing only TatA subunits. Substrates initially bind to the TatABC complex, which probably triggers association of the separate TatA complex to form the active translocon.

It localises to the cell inner membrane. In terms of biological role, part of the twin-arginine translocation (Tat) system that transports large folded proteins containing a characteristic twin-arginine motif in their signal peptide across membranes. TatA could form the protein-conducting channel of the Tat system. The polypeptide is Sec-independent protein translocase protein TatA (Legionella pneumophila (strain Corby)).